The chain runs to 683 residues: Pre-mRNA-splicing factor CLF1 (683 aa).

HAT repeat units lie at residues 40–72 (DWQR…FEYE), 74–106 (RDMR…CELR), 108–140 (RDVN…MEES), 142–173 (GQVE…FETR), 175–206 (GQVE…FERK), 291–323 (SILF…LLEE), 336–367 (ATVK…FLET), 374–407 (LTRS…FEIR), 409–440 (EKLD…LEIK), 442–474 (KEFD…LEEN), 476–513 (GDED…FETD), 515–547 (SEFE…YESS), and 582–620 (ENKE…YESI).

The protein belongs to the crooked-neck family. As to quaternary structure, associated with the spliceosome.

The protein localises to the nucleus. Functionally, involved in pre-mRNA splicing and cell cycle progression. Required for the spliceosome assembly and initiation of the DNA replication. The chain is Pre-mRNA-splicing factor CLF1 (CLF1) from Eremothecium gossypii (strain ATCC 10895 / CBS 109.51 / FGSC 9923 / NRRL Y-1056) (Yeast).